The primary structure comprises 1134 residues: Phospholipid-transporting ATPase IH (1134 aa).

The Cytoplasmic portion of the chain corresponds to 1 to 61 (MDCSLVRTLV…SSKYTFWNFI (61 aa)). Residues 62–82 (PKNLFEQFRRVANFYFLIIFL) traverse the membrane as a helical segment. The Extracellular portion of the chain corresponds to 83–88 (VQLIID). Residues 89–110 (TPTSPVTSGLPLFFVITVTAIK) form a helical membrane-spanning segment. At 111–296 (QGYEDWLRHK…SAVEKSMNAF (186 aa)) the chain is on the cytoplasmic side. The chain crosses the membrane as a helical span at residues 297–318 (LIVYLCILISKALINTVLKYMW). Residues 319–349 (QSEPFRDEPWYNQKTESERQRNLFLKAFTDF) lie on the Extracellular side of the membrane. A helical transmembrane segment spans residues 350–372 (LAFMVLFNYIIPVSMYVTVEMQK). The Cytoplasmic segment spans residues 373–881 (FLGSYFITWD…GHFYYIRISE (509 aa)). The 4-aspartylphosphate intermediate role is filled by aspartate 414. ATP-binding residues include aspartate 414, lysine 415, threonine 416, glutamate 511, phenylalanine 553, lysine 576, arginine 607, threonine 687, glycine 688, and aspartate 689. Aspartate 414 provides a ligand contact to Mg(2+). Residue threonine 416 coordinates Mg(2+). A Phosphoserine modification is found at serine 738. Positions 798 and 804 each coordinate ATP. Aspartate 825 provides a ligand contact to Mg(2+). The ATP site is built by asparagine 828 and aspartate 829. Residue aspartate 829 coordinates Mg(2+). Residues 882 to 902 (LVQYFFYKNVCFIFPQFLYQF) form a helical membrane-spanning segment. Over 903–914 (FCGFSQQTLYDT) the chain is Extracellular. Residues 915 to 934 (AYLTLYNISFTSLPILLYSL) form a helical membrane-spanning segment. Over 935-964 (MEQHVGIDVLKRDPTLYRDVAKNALLRWRV) the chain is Cytoplasmic. Residues 965–986 (FIYWTLLGLFDALVFFFGAYFV) form a helical membrane-spanning segment. Residues 987 to 1000 (FENTTVTSNGQIFG) lie on the Extracellular side of the membrane. A helical membrane pass occupies residues 1001 to 1023 (NWTFGTLVFTVMVFTVTLKLALD). Residues 1024–1029 (THYWTW) lie on the Cytoplasmic side of the membrane. Residues 1030–1050 (INHFVIWGSLLFYVVFSLLWG) traverse the membrane as a helical segment. The Extracellular portion of the chain corresponds to 1051–1068 (GVIWPFLNYQRMYYVFIQ). Residues 1069–1093 (MLSSGPAWLAIVLLVTISLLPDVLK) form a helical membrane-spanning segment. Residues 1094–1134 (KVLCRQLWPTATERVQTKSQCLSVEQSTIFMLSQTSSSLSF) lie on the Cytoplasmic side of the membrane.

The protein belongs to the cation transport ATPase (P-type) (TC 3.A.3) family. Type IV subfamily. Component of a P4-ATPase flippase complex which consists of a catalytic alpha subunit ATP11A and an accessory beta subunit TMEM30A. Mg(2+) serves as cofactor. Post-translationally, proteolytically cleaved by CASP3. In terms of tissue distribution, widely expressed. Expressed in myoblasts.

It is found in the cell membrane. It localises to the early endosome. The protein localises to the recycling endosome. Its subcellular location is the endoplasmic reticulum membrane. The catalysed reaction is ATP + H2O + phospholipidSide 1 = ADP + phosphate + phospholipidSide 2.. It catalyses the reaction a 1,2-diacyl-sn-glycero-3-phospho-L-serine(out) + ATP + H2O = a 1,2-diacyl-sn-glycero-3-phospho-L-serine(in) + ADP + phosphate + H(+). It carries out the reaction a 1,2-diacyl-sn-glycero-3-phosphoethanolamine(out) + ATP + H2O = a 1,2-diacyl-sn-glycero-3-phosphoethanolamine(in) + ADP + phosphate + H(+). Its activity is regulated as follows. The flippase activity is inactivated by caspase-mediated cleavage in apoptotic cells, allowing for PS exposure on the cell surface and engulfment of apoptotic cells by macrophages. The ATPase activity is up-regulated by aminophospholipids PS and PE and down-regulated by increasing intracellular Ca2+ levels. In terms of biological role, catalytic component of a P4-ATPase flippase complex which catalyzes the hydrolysis of ATP coupled to the transport of aminophospholipids, phosphatidylserines (PS) and phosphatidylethanolamines (PE), from the outer to the inner leaflet of the plasma membrane. Does not show flippase activity toward phosphatidylcholine (PC). Contributes to the maintenance of membrane lipid asymmetry with a specific role in morphogenesis of muscle cells. In myoblasts, mediates PS enrichment at the inner leaflet of plasma membrane, triggering PIEZO1-dependent Ca2+ influx and Rho GTPases signal transduction, subsequently leading to the assembly of cortical actomyosin fibers and myotube formation. May be involved in the uptake of farnesyltransferase inhibitor drugs, such as lonafarnib. The chain is Phospholipid-transporting ATPase IH (ATP11A) from Homo sapiens (Human).